Here is a 297-residue protein sequence, read N- to C-terminus: Small ribosomal subunit biogenesis GTPase RsgA (297 aa).

The CP-type G domain occupies 65-223; it reads TNEIGRPAVA…IADTPGFSAI (159 aa). Residues 114–117 and 166–174 each bind GTP; these read SKAD and GQSGAGKST. Cys247, Cys252, His254, and Cys260 together coordinate Zn(2+).

The protein belongs to the TRAFAC class YlqF/YawG GTPase family. RsgA subfamily. As to quaternary structure, monomer. Associates with 30S ribosomal subunit, binds 16S rRNA. Zn(2+) serves as cofactor.

Its subcellular location is the cytoplasm. Its function is as follows. One of several proteins that assist in the late maturation steps of the functional core of the 30S ribosomal subunit. Helps release RbfA from mature subunits. May play a role in the assembly of ribosomal proteins into the subunit. Circularly permuted GTPase that catalyzes slow GTP hydrolysis, GTPase activity is stimulated by the 30S ribosomal subunit. This is Small ribosomal subunit biogenesis GTPase RsgA from Lactobacillus gasseri (strain ATCC 33323 / DSM 20243 / BCRC 14619 / CIP 102991 / JCM 1131 / KCTC 3163 / NCIMB 11718 / NCTC 13722 / AM63).